Consider the following 442-residue polypeptide: D-serine dehydratase (442 aa).

Residue Lys118 is modified to N6-(pyridoxal phosphate)lysine.

It belongs to the serine/threonine dehydratase family. DsdA subfamily. Monomer. The cofactor is pyridoxal 5'-phosphate.

It catalyses the reaction D-serine = pyruvate + NH4(+). This chain is D-serine dehydratase, found in Escherichia coli O6:H1 (strain CFT073 / ATCC 700928 / UPEC).